We begin with the raw amino-acid sequence, 93 residues long: MEFYLEIDPVTLNLIILVASYVILLLVFLISCVLYDCRGKDPSKEYAPEATLEAQPSIRLVVMHPSVAGPHWPKGPGLSLGDPAPLGKKSTMV.

The chain crosses the membrane as a helical span at residues 14–34; that stretch reads LIILVASYVILLLVFLISCVL. Residues 73–93 form a disordered region; sequence PKGPGLSLGDPAPLGKKSTMV.

The protein resides in the membrane. The polypeptide is Small integral membrane protein 36 (Homo sapiens (Human)).